A 306-amino-acid chain; its full sequence is MELTFLGTSAGVPTRTRNMTSIILNLQQPTRAEMWLFDCGEGTQHQFLHTPYHPGKLNKIFITHLHGDHLFGLPGLLCSRSMQGNSLPLTLYGPKGLKEFVETALRLSGSWTDYPLTIIEVGPGLVFDEEGYRVTAYPLSHPVECYGYRIAQHDKPGTLDAAQLIADGVPPGPLFHQLKRGQRVELADGRVIDGSRYLGPSTPGKTLAIFGDTAPCPQALEMARGADVMVHETTLEQAMAEKANSRGHSSSQQTAALAKEAGVGTLIATHFSSRYDAEGCLRMLAECREIFPNTLLAEDFMVYKMA.

Residues His64, His66, Asp68, His69, His141, Asp212, and His270 each coordinate Zn(2+). Catalysis depends on Asp68, which acts as the Proton acceptor.

It belongs to the RNase Z family. RNase BN subfamily. In terms of assembly, homodimer. The cofactor is Zn(2+).

Its function is as follows. Zinc phosphodiesterase, which has both exoribonuclease and endoribonuclease activities. The protein is Ribonuclease BN of Klebsiella pneumoniae subsp. pneumoniae (strain ATCC 700721 / MGH 78578).